The primary structure comprises 465 residues: Asparagine--tRNA ligase (465 aa).

The protein belongs to the class-II aminoacyl-tRNA synthetase family. Homodimer.

It is found in the cytoplasm. The enzyme catalyses tRNA(Asn) + L-asparagine + ATP = L-asparaginyl-tRNA(Asn) + AMP + diphosphate + H(+). This chain is Asparagine--tRNA ligase, found in Clostridium perfringens (strain SM101 / Type A).